The chain runs to 123 residues: Protein Wnt-3a (123 aa).

Ser-1 carries O-palmitoleoyl serine lipidation. Cys-89 and Cys-104 are disulfide-bonded. N-linked (GlcNAc...) asparagine glycosylation is present at Asn-90.

This sequence belongs to the Wnt family. In terms of processing, disulfide bonds have critical and distinct roles in secretion and activity. Loss of each conserved cysteine results in high molecular weight oxidized Wnt oligomers, which are formed through inter-Wnt disulfide bonding. Palmitoleoylation is required for efficient binding to frizzled receptors. Depalmitoleoylation leads to Wnt signaling pathway inhibition.

The protein localises to the secreted. Its subcellular location is the extracellular space. It is found in the extracellular matrix. Its function is as follows. Ligand for members of the frizzled family of seven transmembrane receptors. Functions in the canonical Wnt signaling pathway that results in activation of transcription factors of the TCF/LEF family. Required for normal embryonic mesoderm development and formation of caudal somites. Required for normal morphogenesis of the developing neural tube. The sequence is that of Protein Wnt-3a (WNT-3A) from Plethodon jordani (Red-cheeked salamander).